We begin with the raw amino-acid sequence, 511 residues long: Mediator of RNA polymerase II transcription subunit 17 (511 aa).

It belongs to the Mediator complex subunit 17 family. In terms of assembly, component of the Mediator complex.

It is found in the nucleus. Functionally, component of the Mediator complex, a coactivator involved in the regulated transcription of nearly all RNA polymerase II-dependent genes. Mediator functions as a bridge to convey information from gene-specific regulatory proteins to the basal RNA polymerase II transcription machinery. Mediator is recruited to promoters by direct interactions with regulatory proteins and serves as a scaffold for the assembly of a functional preinitiation complex with RNA polymerase II and the general transcription factors. The protein is Mediator of RNA polymerase II transcription subunit 17 (SRB4) of Yarrowia lipolytica (strain CLIB 122 / E 150) (Yeast).